The chain runs to 136 residues: Large ribosomal subunit protein uL16c (136 aa).

This sequence belongs to the universal ribosomal protein uL16 family. In terms of assembly, part of the 50S ribosomal subunit.

The protein localises to the plastid. It localises to the chloroplast. This is Large ribosomal subunit protein uL16c from Oryza nivara (Indian wild rice).